The sequence spans 160 residues: Competence protein ComGD (160 aa).

Residues 30 to 50 (AFTMLESLLVLGLVSILALGL) traverse the membrane as a helical segment.

The transformation pili are flexible filaments, consisting mainly of the major pilin ComGC and smaller amounts of the minor pilins, including at least ComGD, ComGF and ComGG, and perhaps ComGE. Interacts with ComGE. Interacts with ComGF. Interacts with ComGG.

It is found in the cell membrane. The protein resides in the cell surface. Its subcellular location is the fimbrium. Required for formation of the type IV-like pilus (T4P) that plays a role in transformation. Transformation pili are dynamically extended and retracted, perhaps thereby promoting DNA uptake and transformation. Involved in transformation. Required for DNA binding. This is Competence protein ComGD from Streptococcus pneumoniae (strain ATCC BAA-255 / R6).